The primary structure comprises 557 residues: NADP-dependent malic enzyme (557 aa).

The active-site Proton donor is the tyrosine 88. Arginine 141 contributes to the NADP(+) binding site. Residue lysine 159 is the Proton acceptor of the active site. Glutamate 231, aspartate 232, and aspartate 255 together coordinate a divalent metal cation. Aspartate 255 is a binding site for NADP(+). A Phosphoserine modification is found at serine 322. Asparagine 394 is an NADP(+) binding site.

Belongs to the malic enzymes family. In terms of assembly, homotetramer. Mg(2+) serves as cofactor. It depends on Mn(2+) as a cofactor.

It is found in the cytoplasm. The catalysed reaction is (S)-malate + NADP(+) = pyruvate + CO2 + NADPH. It carries out the reaction oxaloacetate + H(+) = pyruvate + CO2. Catalyzes the oxidative decarboxylation of (S)-malate in the presence of NADP(+) and divalent metal ions, and decarboxylation of oxaloacetate. This Sus scrofa (Pig) protein is NADP-dependent malic enzyme (ME1).